The chain runs to 556 residues: 2,3-bisphosphoglycerate-independent phosphoglycerate mutase (556 aa).

Positions 25 and 78 each coordinate Mn(2+). S78 acts as the Phosphoserine intermediate in catalysis. Residues H137, 167–168 (RD), R203, R210, 283–286 (RADR), and K358 each bind substrate. D427, H431, D468, H469, and H498 together coordinate Mn(2+).

It belongs to the BPG-independent phosphoglycerate mutase family. Monomer. Mn(2+) is required as a cofactor. As to expression, found ubiquitously in germinating seed.

It localises to the cytoplasm. It carries out the reaction (2R)-2-phosphoglycerate = (2R)-3-phosphoglycerate. It participates in carbohydrate degradation; glycolysis; pyruvate from D-glyceraldehyde 3-phosphate: step 3/5. Its function is as follows. Catalyzes the interconversion of 2-phosphoglycerate and 3-phosphoglycerate. The polypeptide is 2,3-bisphosphoglycerate-independent phosphoglycerate mutase (Ricinus communis (Castor bean)).